Consider the following 597-residue polypeptide: Aspartate--tRNA(Asp/Asn) ligase (597 aa).

E176 serves as a coordination point for L-aspartate. The segment at 200-203 (QQFK) is aspartate. Positions 222 and 451 each coordinate L-aspartate. 222–224 (RDE) provides a ligand contact to ATP. E489 is a binding site for ATP. Position 496 (R496) interacts with L-aspartate. Position 541–544 (541–544 (GIDR)) interacts with ATP.

The protein belongs to the class-II aminoacyl-tRNA synthetase family. Type 1 subfamily. As to quaternary structure, homodimer.

It is found in the cytoplasm. It carries out the reaction tRNA(Asx) + L-aspartate + ATP = L-aspartyl-tRNA(Asx) + AMP + diphosphate. In terms of biological role, aspartyl-tRNA synthetase with relaxed tRNA specificity since it is able to aspartylate not only its cognate tRNA(Asp) but also tRNA(Asn). Reaction proceeds in two steps: L-aspartate is first activated by ATP to form Asp-AMP and then transferred to the acceptor end of tRNA(Asp/Asn). This chain is Aspartate--tRNA(Asp/Asn) ligase, found in Orientia tsutsugamushi (strain Boryong) (Rickettsia tsutsugamushi).